The chain runs to 164 residues: Peptidyl-prolyl cis-trans isomerase A (164 aa).

Met-1 carries the N-acetylmethionine modification. N-acetylvaline; in Peptidyl-prolyl cis-trans isomerase A, N-terminally processed is present on Val-2. Residues 7-163 enclose the PPIase cyclophilin-type domain; the sequence is FFDIAVDGEP…KKITIADCGQ (157 aa). The residue at position 28 (Lys-28) is an N6-acetyllysine; alternate. Lys-28 participates in a covalent cross-link: Glycyl lysine isopeptide (Lys-Gly) (interchain with G-Cter in SUMO2); alternate. A Glycyl lysine isopeptide (Lys-Gly) (interchain with G-Cter in ubiquitin); alternate cross-link involves residue Lys-28. Residues Lys-44 and Lys-76 each carry the N6-acetyllysine modification. A disulfide bridge connects residues Cys-62 and Cys-161. Position 77 is a phosphoserine (Ser-77). N6-acetyllysine; alternate is present on Lys-82. Lys-82 participates in a covalent cross-link: Glycyl lysine isopeptide (Lys-Gly) (interchain with G-Cter in SUMO2); alternate. Residue Thr-93 is modified to Phosphothreonine. N-linked (GlcNAc...) asparagine glycosylation occurs at Asn-108. Residues Lys-125, Lys-131, and Lys-133 each carry the N6-acetyllysine modification.

Belongs to the cyclophilin-type PPIase family. PPIase A subfamily. Interacts with protein phosphatase PPP3CA/calcineurin A. Interacts with isoform 2 of BSG/CD147. Interacts with FOXO1; the interaction promotes FOXO1 dephosphorylation, nuclear accumulation and transcriptional activity. Interacts with integrin ITGA2B:ITGB3; the interaction is ROS and peptidyl-prolyl cis-trans isomerase (PPIase) activity-dependent and is increased in the presence of thrombin. Interacts with MAP3K5. Interacts with TARDBP; the interaction is dependent on the RNA-binding activity of TARDBP and the PPIase activity of PPIA/CYPA and the acetylation of PPIA/CYPA at Lys-125 favors the interaction. Interacts with HNRNPA1, HNRNPA2B1, HNRNPC, RBMX, HNRNPK and HNRNPM. Acetylation at Lys-125 markedly inhibits catalysis of cis to trans isomerization. PPIA acetylation also antagonizes the immunosuppressive effects of cyclosporine by inhibiting the sequential steps of cyclosporine binding and calcineurin inhibition. Acetylation at Lys-125 favors the interaction with TARDBP.

It is found in the cytoplasm. The protein resides in the secreted. Its subcellular location is the nucleus. It carries out the reaction [protein]-peptidylproline (omega=180) = [protein]-peptidylproline (omega=0). Its activity is regulated as follows. Binds cyclosporin A (CsA). CsA mediates some of its effects via an inhibitory action on PPIase. Functionally, catalyzes the cis-trans isomerization of proline imidic peptide bonds in oligopeptides. Exerts a strong chemotactic effect on leukocytes partly through activation of one of its membrane receptors BSG/CD147, initiating a signaling cascade that culminates in MAPK/ERK activation. Activates endothelial cells (ECs) in a proinflammatory manner by stimulating activation of NF-kappa-B and ERK, JNK and p38 MAP-kinases and by inducing expression of adhesion molecules including SELE and VCAM1. Induces apoptosis in ECs by promoting the FOXO1-dependent expression of CCL2 and BCL2L11 which are involved in EC chemotaxis and apoptosis. In response to oxidative stress, initiates proapoptotic and antiapoptotic signaling in ECs via activation of NF-kappa-B and AKT1 and up-regulation of antiapoptotic protein BCL2. Negatively regulates MAP3K5/ASK1 kinase activity, autophosphorylation and oxidative stress-induced apoptosis mediated by MAP3K5/ASK1. Necessary for the assembly of TARDBP in heterogeneous nuclear ribonucleoprotein (hnRNP) complexes and regulates TARDBP binding to RNA UG repeats and TARDBP-dependent expression of HDAC6, ATG7 and VCP which are involved in clearance of protein aggregates. Plays an important role in platelet activation and aggregation. Regulates calcium mobilization and integrin ITGA2B:ITGB3 bidirectional signaling via increased ROS production as well as by facilitating the interaction between integrin and the cell cytoskeleton. Binds heparan sulfate glycosaminoglycans. In Bos taurus (Bovine), this protein is Peptidyl-prolyl cis-trans isomerase A (PPIA).